Reading from the N-terminus, the 1551-residue chain is UDP-glucose:glycoprotein glucosyltransferase 1 (1551 aa).

The N-terminal stretch at 1-42 (MCSRGDANAAGAAAARRVTGLCYNMGLLIALALLCLFSLAEA) is a signal peptide. N-linked (GlcNAc...) asparagine glycans are attached at residues N269, N536, N1015, and N1228. Positions 1244 to 1551 (KTEEVKQDKD…QEGSQKHEEL (308 aa)) are glucosyltransferase. A Phosphoserine modification is found at S1277. Residues 1531-1551 (KELGTLHEEETQEGSQKHEEL) form a disordered region. A Prevents secretion from ER motif is present at residues 1548 to 1551 (HEEL).

The protein belongs to the glycosyltransferase 8 family. In terms of assembly, monomer as well as in a tight complex with SELENOF. Interacts with METTL23. Part of a large chaperone multiprotein complex comprising DNAJB11, HSP90B1, HSPA5, HYOU, PDIA2, PDIA4, PDIA6, PPIB, SDF2L1, UGGT1 and very small amounts of ERP29, but not, or at very low levels, CALR nor CANX. Ca(2+) serves as cofactor.

The protein localises to the endoplasmic reticulum lumen. It localises to the endoplasmic reticulum-Golgi intermediate compartment. It catalyses the reaction N(4)-(alpha-D-Man-(1-&gt;2)-alpha-D-Man-(1-&gt;2)-alpha-D-Man-(1-&gt;3)-[alpha-D-Man-(1-&gt;2)-alpha-D-Man-(1-&gt;3)-[alpha-D-Man-(1-&gt;2)-alpha-D-Man-(1-&gt;6)]-alpha-D-Man-(1-&gt;6)]-beta-D-Man-(1-&gt;4)-beta-D-GlcNAc-(1-&gt;4)-beta-D-GlcNAc)-L-asparaginyl-[protein] (N-glucan mannose isomer 9A1,2,3B1,2,3) + UDP-alpha-D-glucose = N(4)-(alpha-D-Glc-(1-&gt;3)-alpha-D-Man-(1-&gt;2)-alpha-D-Man-(1-&gt;2)-alpha-D-Man-(1-&gt;3)-[alpha-D-Man-(1-&gt;2)-alpha-D-Man-(1-&gt;3)-[alpha-D-Man-(1-&gt;2)-alpha-D-Man-(1-&gt;6)]-alpha-D-Man-(1-&gt;6)]-beta-D-Man-(1-&gt;4)-beta-D-GlcNAc-(1-&gt;4)-beta-D-GlcNAc)-L-asparaginyl-[protein] + UDP + H(+). The protein operates within protein modification; protein glycosylation. In terms of biological role, recognizes glycoproteins with minor folding defects. Reglucosylates single N-glycans near the misfolded part of the protein, thus providing quality control for protein folding in the endoplasmic reticulum. Reglucosylated proteins are recognized by calreticulin for recycling to the endoplasmic reticulum and refolding or degradation. The polypeptide is UDP-glucose:glycoprotein glucosyltransferase 1 (Uggt1) (Rattus norvegicus (Rat)).